Reading from the N-terminus, the 85-residue chain is UPF0386 protein VF_0869 (85 aa).

This sequence belongs to the UPF0386 family.

This is UPF0386 protein VF_0869 from Aliivibrio fischeri (strain ATCC 700601 / ES114) (Vibrio fischeri).